We begin with the raw amino-acid sequence, 332 residues long: Trans-2'-carboxybenzalpyruvate hydratase-aldolase (332 aa).

K178 functions as the Schiff-base intermediate with substrate in the catalytic mechanism.

The protein belongs to the DapA family. As to quaternary structure, homotrimer.

The catalysed reaction is (3Z)-4-(2-carboxyphenyl)-2-oxobut-3-enoate + H2O = 2-formylbenzoate + pyruvate. Its activity is regulated as follows. Not inhibited by sodium borohydride or sodium pyruvate. Unaffected by EDTA, EGTA, Mn(2+), Mg(2+) and Ca(2+). In terms of biological role, plays a role in phenanthrene catabolism. Catalyzes the transformation of trans-2'-carboxbenzalpyruvate to 2-formylbenzoate and pyruvate. This chain is Trans-2'-carboxybenzalpyruvate hydratase-aldolase, found in Nocardioides sp. (strain KP7).